Here is a 482-residue protein sequence, read N- to C-terminus: Putative metallophosphoesterase F40B5.2 (482 aa).

A run of 4 helical transmembrane segments spans residues 15–35 (MNLK…SIAI), 129–149 (ALMM…YIFL), 156–176 (IAIT…FLLI), and 205–225 (CYHI…GLYT). Residues aspartate 256, histidine 258, aspartate 288, asparagine 319, histidine 421, and histidine 423 each coordinate a divalent metal cation.

The protein belongs to the metallophosphoesterase superfamily. LOC643853 family.

It localises to the membrane. The chain is Putative metallophosphoesterase F40B5.2 from Caenorhabditis elegans.